The primary structure comprises 403 residues: MAFSFGQQGSSIKAPSIGSTGVFGQSNTTKPTAPFGSGSIFGSTNTNVGAGGPTGSSSAPPFGNSIFGKTQQQPTTSFSNTTTNAPQSTVFGQNAASRTGNSNTQPLFSWSTVNNPTKPVDETNATIPSSLLLSSGISPNATVSNAQYGPAQPPSVEEQVQKILNAWNLNHPDCAFQRFFYNKVPVEQAALYVKPPNYNQQKWDEAVANRPSNSVVPVLAVGFPDVQKRINMQIQQVNTYRIRMREIVETLGRLSNKHDLDFSIKLAEAKNRHVRLSERILRLAIKVHVLRHRGYALKPNEEELRKKLDDLTKSLNNPEIFGRLNEIWARITLIFEGEKISEDQRSNLAKGVVDWRKNSDQLEVITDVLRDHQVGLSYVVKLMQEDLATLNKQLTEHVPQSQK.

Polar residues-rich tracts occupy residues 1-31 (MAFS…TTKP) and 67-124 (FGKT…DETN). The interval 1–124 (MAFSFGQQGS…NPTKPVDETN (124 aa)) is disordered.

It is found in the cytoplasm. It localises to the nucleus. Functionally, functions as a component of the nuclear pore complex (NPC). NPC components, collectively referred to as nucleoporins (NUPs), can play the role of both NPC structural components and of docking or interaction partners for transiently associated nuclear transport factors. Active directional transport is assured by both, a Phe-Gly (FG) repeat affinity gradient for these transport factors across the NPC and a transport cofactor concentration gradient across the nuclear envelope. The sequence is that of Nucleoporin nup44 (nup44) from Schizosaccharomyces pombe (strain 972 / ATCC 24843) (Fission yeast).